Consider the following 336-residue polypeptide: Dihydroorotate dehydrogenase (quinone) (336 aa).

FMN contacts are provided by residues 62–66 (AGLDK) and Thr-86. Lys-66 is a substrate binding site. 111-115 (NRMGF) lines the substrate pocket. FMN is bound by residues Asn-139 and Asn-172. Asn-172 provides a ligand contact to substrate. The active-site Nucleophile is the Ser-175. Asn-177 lines the substrate pocket. Residues Lys-217 and Thr-245 each contribute to the FMN site. 246–247 (NT) is a substrate binding site. Residues Gly-268, Gly-297, and 318–319 (YS) each bind FMN.

It belongs to the dihydroorotate dehydrogenase family. Type 2 subfamily. In terms of assembly, monomer. It depends on FMN as a cofactor.

Its subcellular location is the cell membrane. The enzyme catalyses (S)-dihydroorotate + a quinone = orotate + a quinol. The protein operates within pyrimidine metabolism; UMP biosynthesis via de novo pathway; orotate from (S)-dihydroorotate (quinone route): step 1/1. Its function is as follows. Catalyzes the conversion of dihydroorotate to orotate with quinone as electron acceptor. This chain is Dihydroorotate dehydrogenase (quinone), found in Klebsiella pneumoniae subsp. pneumoniae (strain ATCC 700721 / MGH 78578).